Here is a 626-residue protein sequence, read N- to C-terminus: Glutamate--cysteine ligase (626 aa).

Belongs to the glutamate--cysteine ligase type 3 family. Monomer.

It catalyses the reaction L-cysteine + L-glutamate + ATP = gamma-L-glutamyl-L-cysteine + ADP + phosphate + H(+). Its pathway is sulfur metabolism; glutathione biosynthesis; glutathione from L-cysteine and L-glutamate: step 1/2. In terms of biological role, an essential enzyme in glutathione (L-gamma-glutamyl-L-cysteinylglycine, GSH) biosynthesis, GSH is essential for growth and differentiation to prespore stage. Catalyzes the condensation of glutamate to cysteine. This chain is Glutamate--cysteine ligase (gcsA), found in Dictyostelium discoideum (Social amoeba).